A 258-amino-acid chain; its full sequence is MEEQGTGIRVEAMTAEYAQQARAWAERLGLPLQDDTAAFAVQVGVDGLQIQQLGPQAPGPVRVDFVEGQAAHRRQFGGGNGQMIAKAVGIAQGIRPQVLDATAGLGKDAFVLASLGCQMTLIERQPLIAALLEDGLARARADEEVGPIVGRMRLLTGNAIERMRAWEGEAPQVIYLDPMFPHRDKSALVKKEMRVFRPLVGDDLDAPALLEAALALASHRVVVKRPRKAPIIDGPKPSHSLEGKSSRYDIYPKKALKA.

Residues 123–124 and Asp-177 each bind S-adenosyl-L-methionine; that span reads ER. Positions 232–258 are disordered; the sequence is IDGPKPSHSLEGKSSRYDIYPKKALKA. The span at 239-252 shows a compositional bias: basic and acidic residues; it reads HSLEGKSSRYDIYP.

Belongs to the methyltransferase superfamily. RsmJ family.

The protein localises to the cytoplasm. It carries out the reaction guanosine(1516) in 16S rRNA + S-adenosyl-L-methionine = N(2)-methylguanosine(1516) in 16S rRNA + S-adenosyl-L-homocysteine + H(+). Its function is as follows. Specifically methylates the guanosine in position 1516 of 16S rRNA. This is Ribosomal RNA small subunit methyltransferase J from Pseudomonas putida (strain ATCC 47054 / DSM 6125 / CFBP 8728 / NCIMB 11950 / KT2440).